Consider the following 251-residue polypeptide: Imidazole glycerol phosphate synthase subunit HisF (251 aa).

Active-site residues include Asp-11 and Asp-130.

It belongs to the HisA/HisF family. In terms of assembly, heterodimer of HisH and HisF.

It is found in the cytoplasm. It carries out the reaction 5-[(5-phospho-1-deoxy-D-ribulos-1-ylimino)methylamino]-1-(5-phospho-beta-D-ribosyl)imidazole-4-carboxamide + L-glutamine = D-erythro-1-(imidazol-4-yl)glycerol 3-phosphate + 5-amino-1-(5-phospho-beta-D-ribosyl)imidazole-4-carboxamide + L-glutamate + H(+). The protein operates within amino-acid biosynthesis; L-histidine biosynthesis; L-histidine from 5-phospho-alpha-D-ribose 1-diphosphate: step 5/9. In terms of biological role, IGPS catalyzes the conversion of PRFAR and glutamine to IGP, AICAR and glutamate. The HisF subunit catalyzes the cyclization activity that produces IGP and AICAR from PRFAR using the ammonia provided by the HisH subunit. This is Imidazole glycerol phosphate synthase subunit HisF from Chlorobium luteolum (strain DSM 273 / BCRC 81028 / 2530) (Pelodictyon luteolum).